The primary structure comprises 348 residues: MAEQQKGLTYADAGVDIDAGNALVERIKPAAKRTARPGTVSGLGGFGALFDLKAAGYQDPVLVAATDGVGTKLRIAIDTGEVDTIGIDLVAMCVNDLVCQGAEPLFFLDYFATGKLEVAQAARIIEGIAEGCAASGCALIGGETAEMPGMYHKGDFDLAGFAVGAMERGADLPQGVAEGDLLLGLGSNGVHSNGYSFVRKVVELSGLGWDAPAPFGGDSLGRALLAPTRLYVKQALAAVRAGGVHALAHITGGGLTENLPRVLPKGLGARIDLSAWELPPVFRWLAETASMAEPELLKTFNCGIGMIVVVAADRADEIAALLAAEGETVTRIGEVIAGEGVSYDGRLL.

Belongs to the AIR synthase family.

It is found in the cytoplasm. It catalyses the reaction 2-formamido-N(1)-(5-O-phospho-beta-D-ribosyl)acetamidine + ATP = 5-amino-1-(5-phospho-beta-D-ribosyl)imidazole + ADP + phosphate + H(+). The protein operates within purine metabolism; IMP biosynthesis via de novo pathway; 5-amino-1-(5-phospho-D-ribosyl)imidazole from N(2)-formyl-N(1)-(5-phospho-D-ribosyl)glycinamide: step 2/2. The chain is Phosphoribosylformylglycinamidine cyclo-ligase from Cereibacter sphaeroides (strain ATCC 17023 / DSM 158 / JCM 6121 / CCUG 31486 / LMG 2827 / NBRC 12203 / NCIMB 8253 / ATH 2.4.1.) (Rhodobacter sphaeroides).